Consider the following 336-residue polypeptide: Porphobilinogen deaminase (336 aa).

An S-(dipyrrolylmethanemethyl)cysteine modification is found at Cys-251. Ser-327 and Ser-329 each carry phosphoserine.

This sequence belongs to the HMBS family. Dipyrromethane serves as cofactor.

It carries out the reaction 4 porphobilinogen + H2O = hydroxymethylbilane + 4 NH4(+). It functions in the pathway porphyrin-containing compound metabolism; protoporphyrin-IX biosynthesis; coproporphyrinogen-III from 5-aminolevulinate: step 2/4. Functionally, tetrapolymerization of the monopyrrole PBG into the hydroxymethylbilane pre-uroporphyrinogen in several discrete steps. The protein is Porphobilinogen deaminase (hem3) of Schizosaccharomyces pombe (strain 972 / ATCC 24843) (Fission yeast).